Consider the following 162-residue polypeptide: Interleukin-15 (162 aa).

An N-terminal signal peptide occupies residues 1–29 (MRISKPHLRSVSIQCYLCLLLNSHFLTEA). The propeptide occupies 30–48 (GIHVFILGCFSAGLPKTEA). 2 cysteine pairs are disulfide-bonded: cysteine 83–cysteine 133 and cysteine 90–cysteine 136. Asparagine 127 is a glycosylation site (N-linked (GlcNAc...) asparagine).

The protein belongs to the IL-15/IL-21 family.

It is found in the secreted. In terms of biological role, cytokine that plays a major role in the development of inflammatory and protective immune responses to microbial invaders and parasites by modulating immune cells of both the innate and adaptive immune systems. Stimulates the proliferation of natural killer cells, T-cells and B-cells and promotes the secretion of several cytokines. In monocytes, induces the production of IL8 and monocyte chemotactic protein 1/CCL2, two chemokines that attract neutrophils and monocytes respectively to sites of infection. Unlike most cytokines, which are secreted in soluble form, IL15 is expressed in association with its high affinity IL15RA on the surface of IL15-producing cells and delivers signals to target cells that express IL2RB and IL2RG receptor subunits. Binding to its receptor triggers the phosphorylation of JAK1 and JAK3 and the recruitment and subsequent phosphorylation of signal transducer and activator of transcription-3/STAT3 and STAT5. In mast cells, induces the rapid tyrosine phosphorylation of STAT6 and thereby controls mast cell survival and release of cytokines such as IL4. This Macaca thibetana (Pere David's macaque) protein is Interleukin-15 (IL15).